The primary structure comprises 633 residues: tRNA uridine 5-carboxymethylaminomethyl modification enzyme MnmG (633 aa).

FAD-binding positions include 15 to 20 (GAGHAG), Ile-127, and Ser-182. Residue 276 to 290 (GPRYCPSIEDKIVRF) participates in NAD(+) binding. Gln-373 provides a ligand contact to FAD.

Belongs to the MnmG family. Homodimer. Heterotetramer of two MnmE and two MnmG subunits. The cofactor is FAD.

It is found in the cytoplasm. In terms of biological role, NAD-binding protein involved in the addition of a carboxymethylaminomethyl (cmnm) group at the wobble position (U34) of certain tRNAs, forming tRNA-cmnm(5)s(2)U34. This chain is tRNA uridine 5-carboxymethylaminomethyl modification enzyme MnmG, found in Streptococcus agalactiae serotype III (strain NEM316).